Reading from the N-terminus, the 103-residue chain is Probable protease inhibitor Egf0.4b (103 aa).

Positions 1 to 22 are cleaved as a signal peptide; that stretch reads MMSEKFALVLLVACIAFIGIET. One can recognise a TIL domain in the interval 35–87; that stretch reads CGENEAYDSMRRGCEERCDDHNPTFCFKFTTVCWCEKGYVRDKSDTCIKVEDC.

The protein belongs to the polydnaviridae EGF-like motif protein family.

The protein is Probable protease inhibitor Egf0.4b (O11) of Microplitis demolitor bracovirus (isolate Webb) (MdBV).